The chain runs to 354 residues: MNEAIIQLDHIDITFRQKKRVIEAVKDVTVHINQGDIYGIVGYSGAGKSTLVRVINLLQAPTNGKITVDGDVTFDQGKIQLSANALRQKRRDIGMIFQHFNLMAQKTAKENVAFALRHSSLSKTEKEHKVIELLELVGLSERADNYPAQLSGGQKQRVAIARALANDPKILISDEATSALDPKTTKQILALLQELNRKLGLTIVMITHEMQIVKDICNRVAVMQNGVLIEEGSVLDIFSNPKEALTQKFITTATGIDEALEKINQQDIVKHLPANALLAQLKYAGTSTDEPLLNSIYRQFEVTANILYGNIEILDHIPVGDMIVVLEGQAENILAAEKALHEAGVDVSILKRGA.

Residues 8-250 (LDHIDITFRQ…PKEALTQKFI (243 aa)) enclose the ABC transporter domain. 42-49 (GYSGAGKS) is a binding site for ATP.

It belongs to the ABC transporter superfamily. Methionine importer (TC 3.A.1.24) family. In terms of assembly, the complex is composed of two ATP-binding proteins (MetN), two transmembrane proteins (MetI) and a solute-binding protein (MetQ).

The protein resides in the cell membrane. The enzyme catalyses L-methionine(out) + ATP + H2O = L-methionine(in) + ADP + phosphate + H(+). It carries out the reaction D-methionine(out) + ATP + H2O = D-methionine(in) + ADP + phosphate + H(+). In terms of biological role, part of the ABC transporter complex MetNIQ involved in methionine import. Responsible for energy coupling to the transport system. The protein is Methionine import ATP-binding protein MetN of Streptococcus pyogenes serotype M6 (strain ATCC BAA-946 / MGAS10394).